A 400-amino-acid polypeptide reads, in one-letter code: tRNA-specific 2-thiouridylase MnmA (400 aa).

ATP-binding positions include 19-26 (AMSGGVDS) and Leu45. Cys113 functions as the Nucleophile in the catalytic mechanism. Cys113 and Cys210 are disulfide-bonded. Gly137 lines the ATP pocket. The interaction with tRNA stretch occupies residues 160 to 162 (RDQ). Cys210 (cysteine persulfide intermediate) is an active-site residue.

It belongs to the MnmA/TRMU family.

It is found in the cytoplasm. The catalysed reaction is S-sulfanyl-L-cysteinyl-[protein] + uridine(34) in tRNA + AH2 + ATP = 2-thiouridine(34) in tRNA + L-cysteinyl-[protein] + A + AMP + diphosphate + H(+). Functionally, catalyzes the 2-thiolation of uridine at the wobble position (U34) of tRNA, leading to the formation of s(2)U34. This chain is tRNA-specific 2-thiouridylase MnmA, found in Nitrobacter winogradskyi (strain ATCC 25391 / DSM 10237 / CIP 104748 / NCIMB 11846 / Nb-255).